Reading from the N-terminus, the 729-residue chain is Polyribonucleotide nucleotidyltransferase (729 aa).

Residues aspartate 485 and aspartate 491 each contribute to the Mg(2+) site. One can recognise a KH domain in the interval 552-611; the sequence is PRITTMKVAEDKIRTIIGKGGATIKGLIESTGVSIDIDDSGVIQLFSPDKMALEEAQKQI. The S1 motif domain maps to 621–689; it reads GQTYQGKVSK…KQGRVKLEWK (69 aa). The interval 710 to 729 is disordered; that stretch reads TMEEQSEEINSGNKISEEEE.

This sequence belongs to the polyribonucleotide nucleotidyltransferase family. In terms of assembly, component of the RNA degradosome, which is a multiprotein complex involved in RNA processing and mRNA degradation. The cofactor is Mg(2+).

The protein resides in the cytoplasm. It catalyses the reaction RNA(n+1) + phosphate = RNA(n) + a ribonucleoside 5'-diphosphate. Involved in mRNA degradation. Catalyzes the phosphorolysis of single-stranded polyribonucleotides processively in the 3'- to 5'-direction. The sequence is that of Polyribonucleotide nucleotidyltransferase from Legionella pneumophila (strain Paris).